A 642-amino-acid polypeptide reads, in one-letter code: Threonine--tRNA ligase (642 aa).

The region spanning 1-61 is the TGS domain; the sequence is MPVITLPDGS…ENDATLSIIT (61 aa). Positions 243-534 are catalytic; that stretch reads DHRKIGKQLD…LTEEFAGFFP (292 aa). C334, H385, and H511 together coordinate Zn(2+).

It belongs to the class-II aminoacyl-tRNA synthetase family. In terms of assembly, homodimer. It depends on Zn(2+) as a cofactor.

The protein localises to the cytoplasm. The enzyme catalyses tRNA(Thr) + L-threonine + ATP = L-threonyl-tRNA(Thr) + AMP + diphosphate + H(+). In terms of biological role, catalyzes the attachment of threonine to tRNA(Thr) in a two-step reaction: L-threonine is first activated by ATP to form Thr-AMP and then transferred to the acceptor end of tRNA(Thr). Also edits incorrectly charged L-seryl-tRNA(Thr). This Salmonella paratyphi A (strain ATCC 9150 / SARB42) protein is Threonine--tRNA ligase.